Reading from the N-terminus, the 252-residue chain is tRNA pseudouridine synthase A (252 aa).

The active-site Nucleophile is the Asp-54. Residue Tyr-112 participates in substrate binding.

It belongs to the tRNA pseudouridine synthase TruA family. In terms of assembly, homodimer.

It carries out the reaction uridine(38/39/40) in tRNA = pseudouridine(38/39/40) in tRNA. Its function is as follows. Formation of pseudouridine at positions 38, 39 and 40 in the anticodon stem and loop of transfer RNAs. The sequence is that of tRNA pseudouridine synthase A from Oenococcus oeni (strain ATCC BAA-331 / PSU-1).